The chain runs to 134 residues: Large ribosomal subunit protein eL28 (134 aa).

Ser60 bears the Phosphoserine mark.

Belongs to the eukaryotic ribosomal protein eL28 family. Component of the large ribosomal subunit (LSU). Mature yeast ribosomes consist of a small (40S) and a large (60S) subunit. The 40S small subunit contains 1 molecule of ribosomal RNA (18S rRNA) and at least 33 different proteins. The large 60S subunit contains 3 rRNA molecules (25S, 5.8S and 5S rRNA) and at least 46 different proteins.

Its subcellular location is the cytoplasm. In terms of biological role, component of the ribosome, a large ribonucleoprotein complex responsible for the synthesis of proteins in the cell. The small ribosomal subunit (SSU) binds messenger RNAs (mRNAs) and translates the encoded message by selecting cognate aminoacyl-transfer RNA (tRNA) molecules. The large subunit (LSU) contains the ribosomal catalytic site termed the peptidyl transferase center (PTC), which catalyzes the formation of peptide bonds, thereby polymerizing the amino acids delivered by tRNAs into a polypeptide chain. The nascent polypeptides leave the ribosome through a tunnel in the LSU and interact with protein factors that function in enzymatic processing, targeting, and the membrane insertion of nascent chains at the exit of the ribosomal tunnel. The protein is Large ribosomal subunit protein eL28 (rpl44) of Schizosaccharomyces pombe (strain 972 / ATCC 24843) (Fission yeast).